We begin with the raw amino-acid sequence, 127 residues long: Ribonuclease P protein component (127 aa).

This sequence belongs to the RnpA family. Consists of a catalytic RNA component (M1 or rnpB) and a protein subunit.

The enzyme catalyses Endonucleolytic cleavage of RNA, removing 5'-extranucleotides from tRNA precursor.. RNaseP catalyzes the removal of the 5'-leader sequence from pre-tRNA to produce the mature 5'-terminus. It can also cleave other RNA substrates such as 4.5S RNA. The protein component plays an auxiliary but essential role in vivo by binding to the 5'-leader sequence and broadening the substrate specificity of the ribozyme. This chain is Ribonuclease P protein component, found in Agrobacterium fabrum (strain C58 / ATCC 33970) (Agrobacterium tumefaciens (strain C58)).